The primary structure comprises 171 residues: NADH-quinone oxidoreductase subunit I 2 (171 aa).

2 4Fe-4S ferredoxin-type domains span residues 39 to 71 (IVLT…LSKA) and 81 to 110 (EHFR…LTPD). [4Fe-4S] cluster-binding residues include Cys51, Cys54, Cys57, Cys61, Cys90, Cys93, Cys96, and Cys100.

This sequence belongs to the complex I 23 kDa subunit family. NDH-1 is composed of 14 different subunits. Subunits NuoA, H, J, K, L, M, N constitute the membrane sector of the complex. [4Fe-4S] cluster serves as cofactor.

Its subcellular location is the cell inner membrane. The catalysed reaction is a quinone + NADH + 5 H(+)(in) = a quinol + NAD(+) + 4 H(+)(out). NDH-1 shuttles electrons from NADH, via FMN and iron-sulfur (Fe-S) centers, to quinones in the respiratory chain. The immediate electron acceptor for the enzyme in this species is believed to be ubiquinone. Couples the redox reaction to proton translocation (for every two electrons transferred, four hydrogen ions are translocated across the cytoplasmic membrane), and thus conserves the redox energy in a proton gradient. This Rhodopseudomonas palustris (strain BisB18) protein is NADH-quinone oxidoreductase subunit I 2.